Reading from the N-terminus, the 249-residue chain is tRNA (guanine-N(1)-)-methyltransferase (249 aa).

Residues glycine 113 and 133 to 138 (IGDFVL) each bind S-adenosyl-L-methionine.

It belongs to the RNA methyltransferase TrmD family. As to quaternary structure, homodimer.

The protein localises to the cytoplasm. The catalysed reaction is guanosine(37) in tRNA + S-adenosyl-L-methionine = N(1)-methylguanosine(37) in tRNA + S-adenosyl-L-homocysteine + H(+). In terms of biological role, specifically methylates guanosine-37 in various tRNAs. The polypeptide is tRNA (guanine-N(1)-)-methyltransferase (Aliivibrio salmonicida (strain LFI1238) (Vibrio salmonicida (strain LFI1238))).